A 484-amino-acid polypeptide reads, in one-letter code: Aspartyl/glutamyl-tRNA(Asn/Gln) amidotransferase subunit B (484 aa).

The protein belongs to the GatB/GatE family. GatB subfamily. In terms of assembly, heterotrimer of A, B and C subunits.

The catalysed reaction is L-glutamyl-tRNA(Gln) + L-glutamine + ATP + H2O = L-glutaminyl-tRNA(Gln) + L-glutamate + ADP + phosphate + H(+). It catalyses the reaction L-aspartyl-tRNA(Asn) + L-glutamine + ATP + H2O = L-asparaginyl-tRNA(Asn) + L-glutamate + ADP + phosphate + 2 H(+). In terms of biological role, allows the formation of correctly charged Asn-tRNA(Asn) or Gln-tRNA(Gln) through the transamidation of misacylated Asp-tRNA(Asn) or Glu-tRNA(Gln) in organisms which lack either or both of asparaginyl-tRNA or glutaminyl-tRNA synthetases. The reaction takes place in the presence of glutamine and ATP through an activated phospho-Asp-tRNA(Asn) or phospho-Glu-tRNA(Gln). The chain is Aspartyl/glutamyl-tRNA(Asn/Gln) amidotransferase subunit B from Dechloromonas aromatica (strain RCB).